A 135-amino-acid polypeptide reads, in one-letter code: Small ribosomal subunit protein uS9 (135 aa).

Residues 107-118 show a composition bias toward basic and acidic residues; that stretch reads LVGDPRRTEPHK. Residues 107 to 135 are disordered; that stretch reads LVGDPRRTEPHKPNRSTKGPRAKRQKSYR. Residues 119-135 show a composition bias toward basic residues; sequence PNRSTKGPRAKRQKSYR.

It belongs to the universal ribosomal protein uS9 family. In terms of assembly, part of the 30S ribosomal subunit.

This chain is Small ribosomal subunit protein uS9, found in Pyrococcus furiosus (strain ATCC 43587 / DSM 3638 / JCM 8422 / Vc1).